The sequence spans 539 residues: Inosine-5'-monophosphate dehydrogenase (539 aa).

2 CBS domains span residues Ile140–Ile196 and Met200–Cys257. NAD(+) is bound by residues Asp292 and Gly343 to Gly345. Positions 345 and 347 each coordinate K(+). Ser348 lines the IMP pocket. Cys350 contacts K(+). Cys350 (thioimidate intermediate) is an active-site residue. IMP-binding positions include Asp383–Gly385, Gly406–Ser407, and Tyr430–Gly434. Residue Arg446 is the Proton acceptor of the active site. An IMP-binding site is contributed by Glu460. Residues Glu514 and His516 each contribute to the K(+) site. A disordered region spans residues Pro517–Gly539.

This sequence belongs to the IMPDH/GMPR family. Homotetramer. The cofactor is K(+).

The catalysed reaction is IMP + NAD(+) + H2O = XMP + NADH + H(+). It functions in the pathway purine metabolism; XMP biosynthesis via de novo pathway; XMP from IMP: step 1/1. With respect to regulation, mycophenolic acid (MPA) is a non-competitive inhibitor that prevents formation of the closed enzyme conformation by binding to the same site as the amobile flap. In contrast, mizoribine monophosphate (MZP) is a competitive inhibitor that induces the closed conformation. MPA is a potent inhibitor of mammalian IMPDHs but a poor inhibitor of the bacterial enzymes. MZP is a more potent inhibitor of bacterial IMPDH. Catalyzes the conversion of inosine 5'-phosphate (IMP) to xanthosine 5'-phosphate (XMP), the first committed and rate-limiting step in the de novo synthesis of guanine nucleotides, and therefore plays an important role in the regulation of cell growth. In Rhodopirellula baltica (strain DSM 10527 / NCIMB 13988 / SH1), this protein is Inosine-5'-monophosphate dehydrogenase.